The chain runs to 247 residues: Triosephosphate isomerase (247 aa).

Residues asparagine 10 and lysine 12 each coordinate substrate. Histidine 94 serves as the catalytic Electrophile. The Proton acceptor role is filled by glutamate 164.

Belongs to the triosephosphate isomerase family. As to quaternary structure, homodimer.

It localises to the cytoplasm. The enzyme catalyses D-glyceraldehyde 3-phosphate = dihydroxyacetone phosphate. It carries out the reaction dihydroxyacetone phosphate = methylglyoxal + phosphate. Its pathway is carbohydrate biosynthesis; gluconeogenesis. The protein operates within carbohydrate degradation; glycolysis; D-glyceraldehyde 3-phosphate from glycerone phosphate: step 1/1. In terms of biological role, triosephosphate isomerase is an extremely efficient metabolic enzyme that catalyzes the interconversion between dihydroxyacetone phosphate (DHAP) and D-glyceraldehyde-3-phosphate (G3P) in glycolysis and gluconeogenesis. Its function is as follows. It is also responsible for the non-negligible production of methylglyoxal a reactive cytotoxic side-product that modifies and can alter proteins, DNA and lipids. The chain is Triosephosphate isomerase (tpi-1) from Caenorhabditis elegans.